The chain runs to 256 residues: Cell division protein DivIB (256 aa).

At 1 to 23 (MSKDLISTDEYIKIKKKRKRIKK) the chain is on the cytoplasmic side. The helical transmembrane segment at 24 to 44 (IVVLFIFLISILVTLCLKIPY) threads the bilayer. Residues 45–113 (FNIESIEIKG…NKLQIYVKER (69 aa)) enclose the POTRA domain. The Extracellular portion of the chain corresponds to 45–256 (FNIESIEIKG…EGNPVFYIEK (212 aa)).

Belongs to the FtsQ/DivIB family. DivIB subfamily.

It is found in the cell membrane. Its function is as follows. Cell division protein that may be involved in stabilizing or promoting the assembly of the division complex. In Clostridium botulinum (strain Hall / ATCC 3502 / NCTC 13319 / Type A), this protein is Cell division protein DivIB.